Here is a 153-residue protein sequence, read N- to C-terminus: MIIQISNRQEDFQIDDELTSDIEKSIRICLLQELNDDNYEISLSFVSESEIRKLNSDYRDKDSVTDVLSFPLDDDFAIQTNLLGDIIICCKRAIEQAKEYNHSIKREIVYLVVHSMFHLLGYDHIDESDRIIMRNKEKSALKEIGIYKDEEFK.

Histidine 114, histidine 118, and histidine 124 together coordinate Zn(2+).

This sequence belongs to the endoribonuclease YbeY family. Requires Zn(2+) as cofactor.

Its subcellular location is the cytoplasm. Its function is as follows. Single strand-specific metallo-endoribonuclease involved in late-stage 70S ribosome quality control and in maturation of the 3' terminus of the 16S rRNA. This chain is Endoribonuclease YbeY, found in Finegoldia magna (strain ATCC 29328 / DSM 20472 / WAL 2508) (Peptostreptococcus magnus).